We begin with the raw amino-acid sequence, 600 residues long: Potassium-transporting ATPase potassium-binding subunit (600 aa).

11 helical membrane-spanning segments follow: residues 6 to 26 (IILLAVFLLVLLVLAYPLGTY), 65 to 85 (GYAIALLVFNVLGTFFVYAVQ), 136 to 156 (ALSGQNFFSAATGIAVIYALI), 179 to 199 (LYVLLPLSVIVAVVLMSQGVI), 283 to 303 (FSNLVEMLAIFLIPAALCFTF), 314 to 334 (WAILGAMTLLFVVLTAVVMGA), 367 to 387 (FGISASTLFAAVTTAASCGAV), 419 to 439 (GLYGMLVFAILAVFIAGLMIG), 458 to 478 (SLVILVTPCLVLLGTAIAVVL), 523 to 543 (VMLAIAMWFGRFAVIVPVLAI), and 566 to 586 (LFIALLVGTVLLVGVLNYVPA).

This sequence belongs to the KdpA family. The system is composed of three essential subunits: KdpA, KdpB and KdpC.

Its subcellular location is the cell inner membrane. Part of the high-affinity ATP-driven potassium transport (or Kdp) system, which catalyzes the hydrolysis of ATP coupled with the electrogenic transport of potassium into the cytoplasm. This subunit binds the periplasmic potassium ions and delivers the ions to the membrane domain of KdpB through an intramembrane tunnel. This is Potassium-transporting ATPase potassium-binding subunit from Janthinobacterium sp. (strain Marseille) (Minibacterium massiliensis).